Here is a 318-residue protein sequence, read N- to C-terminus: Homoserine kinase (318 aa).

97 to 107 (PIGSGLGSSAC) serves as a coordination point for ATP.

Belongs to the GHMP kinase family. Homoserine kinase subfamily.

Its subcellular location is the cytoplasm. It carries out the reaction L-homoserine + ATP = O-phospho-L-homoserine + ADP + H(+). Its pathway is amino-acid biosynthesis; L-threonine biosynthesis; L-threonine from L-aspartate: step 4/5. In terms of biological role, catalyzes the ATP-dependent phosphorylation of L-homoserine to L-homoserine phosphate. The polypeptide is Homoserine kinase (Vibrio parahaemolyticus serotype O3:K6 (strain RIMD 2210633)).